We begin with the raw amino-acid sequence, 280 residues long: uncharacterized protein (280 aa).

3 helical membrane-spanning segments follow: residues 15–35, 68–88, and 94–114; these read IVDI…INRL, IGFI…ILAG, and IVIG…VFLI.

This sequence belongs to the MscS (TC 1.A.23) family.

The protein resides in the cell membrane. Its function is as follows. May play a role in resistance to osmotic downshock. This is an uncharacterized protein from Bacillus subtilis (strain 168).